The sequence spans 267 residues: Farnesyl diphosphate phosphatase YisP (267 aa).

Belongs to the phytoene/squalene synthase family. Monomer.

The catalysed reaction is (2E,6E)-farnesyl diphosphate + H2O = (2E,6E)-farnesol + diphosphate. With respect to regulation, diphosphate release from FPP is inhibited by zaragozic acid. A farnesyl diphosphate (FPP) phosphatase. Involved in biofilm formation, its disruption blocks biofilm synthesis which is restored by exogenous farnesol. Releases diphosphate from FPP, was initally suggested to be a squalene synthase. Diphosphate release is higher from FPP than geranyl pyrophosphate (GPP) or geranylgeranyl pyrophosphate (GGPP). Biofilm synthesis is partially restored by exogenous squalene, beta-carotene or retinol. Required for integrity of cell membrane lipid rafts. Involved in spatial organization of membranes, required for the flotillin-like proteins FloT and FloA to function correctly. This Bacillus subtilis (strain 168) protein is Farnesyl diphosphate phosphatase YisP (yisP).